Reading from the N-terminus, the 170-residue chain is Protein BTG1 (170 aa).

This sequence belongs to the BTG family.

Anti-proliferative protein. The polypeptide is Protein BTG1 (BTG1) (Gallus gallus (Chicken)).